Reading from the N-terminus, the 426-residue chain is Serine--tRNA ligase (426 aa).

235 to 237 (TAE) provides a ligand contact to L-serine. An ATP-binding site is contributed by 266-268 (RRE). Glutamate 289 provides a ligand contact to L-serine. ATP is bound at residue 353-356 (EISS). Serine 389 contacts L-serine.

The protein belongs to the class-II aminoacyl-tRNA synthetase family. Type-1 seryl-tRNA synthetase subfamily. In terms of assembly, homodimer. The tRNA molecule binds across the dimer.

The protein localises to the cytoplasm. It carries out the reaction tRNA(Ser) + L-serine + ATP = L-seryl-tRNA(Ser) + AMP + diphosphate + H(+). The enzyme catalyses tRNA(Sec) + L-serine + ATP = L-seryl-tRNA(Sec) + AMP + diphosphate + H(+). Its pathway is aminoacyl-tRNA biosynthesis; selenocysteinyl-tRNA(Sec) biosynthesis; L-seryl-tRNA(Sec) from L-serine and tRNA(Sec): step 1/1. Catalyzes the attachment of serine to tRNA(Ser). Is also able to aminoacylate tRNA(Sec) with serine, to form the misacylated tRNA L-seryl-tRNA(Sec), which will be further converted into selenocysteinyl-tRNA(Sec). The polypeptide is Serine--tRNA ligase (Nostoc punctiforme (strain ATCC 29133 / PCC 73102)).